The chain runs to 417 residues: UDP-N-acetylglucosamine 1-carboxyvinyltransferase (417 aa).

Phosphoenolpyruvate is bound at residue 23–24 (KN). A UDP-N-acetyl-alpha-D-glucosamine-binding site is contributed by Arg93. Asp117 (proton donor) is an active-site residue. UDP-N-acetyl-alpha-D-glucosamine contacts are provided by Asp305 and Val327.

The protein belongs to the EPSP synthase family. MurA subfamily.

Its subcellular location is the cytoplasm. It carries out the reaction phosphoenolpyruvate + UDP-N-acetyl-alpha-D-glucosamine = UDP-N-acetyl-3-O-(1-carboxyvinyl)-alpha-D-glucosamine + phosphate. It participates in cell wall biogenesis; peptidoglycan biosynthesis. Cell wall formation. Adds enolpyruvyl to UDP-N-acetylglucosamine. This is UDP-N-acetylglucosamine 1-carboxyvinyltransferase from Mycolicibacterium paratuberculosis (strain ATCC BAA-968 / K-10) (Mycobacterium paratuberculosis).